The sequence spans 248 residues: Protein GrpE (248 aa).

Positions 229-248 (AAPKEDTLPAQENQSSPADS) are disordered. Positions 238–248 (AQENQSSPADS) are enriched in polar residues.

This sequence belongs to the GrpE family. In terms of assembly, homodimer.

The protein localises to the cytoplasm. Its function is as follows. Participates actively in the response to hyperosmotic and heat shock by preventing the aggregation of stress-denatured proteins, in association with DnaK and GrpE. It is the nucleotide exchange factor for DnaK and may function as a thermosensor. Unfolded proteins bind initially to DnaJ; upon interaction with the DnaJ-bound protein, DnaK hydrolyzes its bound ATP, resulting in the formation of a stable complex. GrpE releases ADP from DnaK; ATP binding to DnaK triggers the release of the substrate protein, thus completing the reaction cycle. Several rounds of ATP-dependent interactions between DnaJ, DnaK and GrpE are required for fully efficient folding. In Trichormus variabilis (strain ATCC 29413 / PCC 7937) (Anabaena variabilis), this protein is Protein GrpE.